The sequence spans 187 residues: Orotate phosphoribosyltransferase (187 aa).

5-phospho-alpha-D-ribose 1-diphosphate contacts are provided by residues R103, K104, K107, and 129–137 (EDVTTSGGS). Orotate contacts are provided by T133 and R161.

Belongs to the purine/pyrimidine phosphoribosyltransferase family. PyrE subfamily. In terms of assembly, homodimer. Mg(2+) serves as cofactor.

The enzyme catalyses orotidine 5'-phosphate + diphosphate = orotate + 5-phospho-alpha-D-ribose 1-diphosphate. It participates in pyrimidine metabolism; UMP biosynthesis via de novo pathway; UMP from orotate: step 1/2. Catalyzes the transfer of a ribosyl phosphate group from 5-phosphoribose 1-diphosphate to orotate, leading to the formation of orotidine monophosphate (OMP). The polypeptide is Orotate phosphoribosyltransferase (Methanosarcina acetivorans (strain ATCC 35395 / DSM 2834 / JCM 12185 / C2A)).